Here is a 478-residue protein sequence, read N- to C-terminus: Zinc metalloproteinase/disintegrin (478 aa).

The N-terminal stretch at 1–20 is a signal peptide; the sequence is MIQVLLVTICLAAFPYQGSS. A propeptide spanning residues 21 to 187 is cleaved from the precursor; the sequence is IILESGNVND…PIKKASDLNL (167 aa). One can recognise a Peptidase M12B domain in the interval 193–389; that stretch reads RYVELFIVVD…QKPQCILKKP (197 aa). Disulfide bonds link Cys304-Cys384, Cys344-Cys368, and Cys346-Cys351. His329 contributes to the Zn(2+) binding site. Glu330 is an active-site residue. Zn(2+) contacts are provided by His333 and His339. Positions 390 to 407 are excised as a propeptide; that stretch reads LRTDTVSTPVSGNELLEA. The Disintegrin domain maps to 397–478; the sequence is TPVSGNELLE…ADCPRNGLYG (82 aa). Cystine bridges form between Cys411–Cys426, Cys413–Cys421, Cys420–Cys443, Cys434–Cys440, Cys439–Cys464, and Cys452–Cys471. The short motif at 456–458 is the Cell attachment site; atypical (MVD) element; the sequence is MVD.

This sequence belongs to the venom metalloproteinase (M12B) family. P-II subfamily. P-IIa sub-subfamily. In terms of assembly, monomer (disintegrin). Zn(2+) is required as a cofactor. Expressed by the venom gland.

It is found in the secreted. It catalyses the reaction Cleavage of 3-Asn-|-Gln-4, 9-Ser-|-His-10 and 14-Ala-|-Leu-15 bonds in insulin B chain and 14-Tyr-|-Gln-15 and 8-Thr-|-Ser-9 in A chain. Cleaves type IV collagen at 73-Ala-|-Gln-74 in alpha1-(IV) and at 7-Gly-|-Leu-8 in alpha2-(IV).. In terms of biological role, snake venom zinc metalloproteinase that causes hemorrhage by provoking the degradation of the sub-endothelial matrix proteins (fibronectin, laminin, type IV collagen, nidogen, and gelatins). Potent inhibitor of both collagen- (IC(50)=4 nM) and ADP-induced (IC(50)=8 nM) platelet aggregation. May act by binding to the platelet receptor GPIIb/GPIIIa (ITGA2B/ITGB3). This chain is Zinc metalloproteinase/disintegrin, found in Crotalus atrox (Western diamondback rattlesnake).